The primary structure comprises 198 residues: MKQFIDFIPLLLFFIVYKLDPRVIDLAGHELTFGGIYSATAVLIISSVVVYGAIFISQRKLEKSQWLTLVACLVFGSLTLAFHSETFLKWKAPVVNWLFALAFIGSHFIGDRLLIKRIMGHALTLPEPVWTRLNVAWIVFFLFCGAANLFVAFTFQDYWVDFKVFGSLGMTVLFLVAQGIYLSRHLHDADPTTPKTED.

5 consecutive transmembrane segments (helical) span residues 36-56 (IYSATAVLIISSVVVYGAIFI), 67-87 (LTLVACLVFGSLTLAFHSETF), 90-110 (WKAPVVNWLFALAFIGSHFIG), 135-155 (VAWIVFFLFCGAANLFVAFTF), and 162-182 (FKVFGSLGMTVLFLVAQGIYL).

This sequence belongs to the YciB family.

The protein localises to the cell inner membrane. Functionally, plays a role in cell envelope biogenesis, maintenance of cell envelope integrity and membrane homeostasis. In Pseudomonas fluorescens (strain SBW25), this protein is Inner membrane-spanning protein YciB.